A 281-amino-acid polypeptide reads, in one-letter code: 4-diphosphocytidyl-2-C-methyl-D-erythritol kinase (281 aa).

Lys15 is an active-site residue. 98-108 (PTGAGLGGGSS) serves as a coordination point for ATP. Asp140 is an active-site residue.

It belongs to the GHMP kinase family. IspE subfamily.

It catalyses the reaction 4-CDP-2-C-methyl-D-erythritol + ATP = 4-CDP-2-C-methyl-D-erythritol 2-phosphate + ADP + H(+). The protein operates within isoprenoid biosynthesis; isopentenyl diphosphate biosynthesis via DXP pathway; isopentenyl diphosphate from 1-deoxy-D-xylulose 5-phosphate: step 3/6. Its function is as follows. Catalyzes the phosphorylation of the position 2 hydroxy group of 4-diphosphocytidyl-2C-methyl-D-erythritol. This Neisseria gonorrhoeae (strain ATCC 700825 / FA 1090) protein is 4-diphosphocytidyl-2-C-methyl-D-erythritol kinase.